The following is a 456-amino-acid chain: FAD-dependent monooxygenase sor5 (456 aa).

Residues 18 to 38 traverse the membrane as a helical segment; it reads PLEVAIVGGGLTGLALALGLL. An N-linked (GlcNAc...) asparagine glycan is attached at asparagine 43. FAD contacts are provided by glutamate 48 and arginine 119. The active site involves arginine 200. FAD is bound by residues aspartate 331 and alanine 344.

It belongs to the paxM FAD-dependent monooxygenase family. FAD is required as a cofactor.

The protein resides in the membrane. Its pathway is secondary metabolite biosynthesis. In terms of biological role, FAD-dependent monooxygenase; part of the SOR gene cluster that mediates the biosynthesis of sorbicillinoids, a diverse group of yellow secondary metabolites that restrict growth of competing pathogenic fungi but not of bacteria. Sorbicillinoids biosynthesis requires the action of two PKSs. The SOR cluster is required for the production of trichodimerol and dihydrotrichotetronin, with sor2 being sufficient for production of trichodimerol, but not dihydrotrichotetronin in the light. Sor1 iteratively combines three acetyl units and the growing chain is modified by the ketoacyl reductase subunit, and optional by the enoyl reductase subunit in the second cycle. The polyketide is then handed over to the PKS sor2, which adds three more acetyl units, and two methyl groups. Sor2 releases an aldehyde, which undergoes spontaneous cyclization resulting in the formation of sorbicillin or 2',3'-dihydrosorbicillin. The monooxygenase sor5 oxidizes sorbicillin and 2',3'-dihydrosorbicillin to 2',3'-dihydrosorbicillinol and sorbicillinol, respectively. The oxidoreductase sor8 further converts sorbicillinol into oxosorbicillinol. Sorbicillinol is the building block for the other sorbicillinoids such as disorbicillinol, bisvertinolon, dihydrobisvertinolone, and dihydrotrichotetronine. This chain is FAD-dependent monooxygenase sor5, found in Hypocrea jecorina (strain QM6a) (Trichoderma reesei).